Reading from the N-terminus, the 449-residue chain is Protein phosphatase fem-2 (449 aa).

Residues glutamate 28–glutamate 34 form an interaction with fem-1 and fem-3 region. Residues isoleucine 54–phenylalanine 56 form an interaction with fem-3 region. A PPM-type phosphatase domain is found at glycine 160–leucine 424. Aspartate 202, glycine 203, aspartate 370, and aspartate 415 together coordinate Mg(2+).

Belongs to the PP2C family. In terms of assembly, component of a complex containing fem-1, fem-2 and fem-3. Interacts (via N-terminus) with fem-1 and fem-3. Component of the CBC(fem-1) E3 ubiquitin-protein ligase complex, at least composed of cul-2, elc-1, tra-1, fem-1, fem-2 and fem-3; mediates the ubiquitination and subsequent proteasomal degradation of tra-1. Interacts with tra-1. Interacts with sel-10. Mg(2+) serves as cofactor. Requires Mn(2+) as cofactor.

The catalysed reaction is O-phospho-L-seryl-[protein] + H2O = L-seryl-[protein] + phosphate. The enzyme catalyses O-phospho-L-threonyl-[protein] + H2O = L-threonyl-[protein] + phosphate. Dephosphorylates auto-phosphorylated Ca(2+)/calmodulin-dependent protein kinase unc-43/CAMKII in vitro. Involved in the regulation of sex determination. Together with fem-3, required for male sexual development by promoting the proteasomal-mediated degradation of tra-1, a transcription repressor of male-specific genes. Promotes apoptosis. The chain is Protein phosphatase fem-2 from Caenorhabditis elegans.